Consider the following 293-residue polypeptide: F-box only protein 6 (293 aa).

The region spanning 10 to 57 (LDSINELPENILLELFTHVPARQLLLNCRLVCSLWRDLIDLMTLWKRK) is the F-box domain. The FBA domain occupies 78–259 (FYFLRSLHRN…VTNSSIVVSP (182 aa)). S258 is modified (phosphoserine). Residues 261–271 (MTRNQASSEAQ) are compositionally biased toward polar residues. The disordered stretch occupies residues 261 to 285 (MTRNQASSEAQPGQKHGQEEAAQSP). Phosphoserine is present on S284.

As to quaternary structure, interacts with VCP. Part of a SCF (SKP1-cullin-F-box) protein ligase complex. Interacts with CHEK1 and CUL1.

Its subcellular location is the cytoplasm. Its pathway is protein modification; protein ubiquitination. Its function is as follows. Substrate-recognition component of some SCF (SKP1-CUL1-F-box protein)-type E3 ubiquitin ligase complexes. Involved in endoplasmic reticulum-associated degradation pathway (ERAD) for misfolded lumenal proteins by recognizing and binding sugar chains on unfolded glycoproteins that are retrotranslocated into the cytosol and promoting their ubiquitination and subsequent degradation. Able to recognize and bind denatured glycoproteins, which are modified with not only high-mannose but also complex-type oligosaccharides. Also recognizes sulfated glycans. Also involved in DNA damage response by specifically recognizing activated CHEK1 (phosphorylated on 'Ser-345'), promoting its ubiquitination and degradation. Ubiquitination of CHEK1 is required to ensure that activated CHEK1 does not accumulate as cells progress through S phase, or when replication forks encounter transient impediments during normal DNA replication. This is F-box only protein 6 (FBXO6) from Homo sapiens (Human).